A 98-amino-acid polypeptide reads, in one-letter code: Large ribosomal subunit protein eL21 (98 aa).

The disordered stretch occupies residues 1–24 (MVKMSHGPRSGSRRKLTKSAEERK).

The protein belongs to the eukaryotic ribosomal protein eL21 family.

In Thermoplasma acidophilum (strain ATCC 25905 / DSM 1728 / JCM 9062 / NBRC 15155 / AMRC-C165), this protein is Large ribosomal subunit protein eL21 (rpl21e).